Here is a 389-residue protein sequence, read N- to C-terminus: Alanine racemase 1 (389 aa).

The active-site Proton acceptor; specific for D-alanine is the Lys-41. N6-(pyridoxal phosphate)lysine is present on Lys-41. Arg-137 lines the substrate pocket. Tyr-266 functions as the Proton acceptor; specific for L-alanine in the catalytic mechanism. Met-313 provides a ligand contact to substrate.

Belongs to the alanine racemase family. Pyridoxal 5'-phosphate serves as cofactor.

The enzyme catalyses L-alanine = D-alanine. Its pathway is amino-acid biosynthesis; D-alanine biosynthesis; D-alanine from L-alanine: step 1/1. Functionally, catalyzes the interconversion of L-alanine and D-alanine. May also act on other amino acids. The protein is Alanine racemase 1 (alr1) of Bacillus subtilis (strain 168).